A 310-amino-acid chain; its full sequence is Putative S-adenosyl-L-methionine-dependent methyltransferase ML2640 (310 aa).

S-adenosyl-L-methionine is bound by residues aspartate 132 and 161–162 (DL).

It belongs to the UPF0677 family.

In terms of biological role, exhibits S-adenosyl-L-methionine-dependent methyltransferase activity. The protein is Putative S-adenosyl-L-methionine-dependent methyltransferase ML2640 of Mycobacterium leprae (strain TN).